Here is a 492-residue protein sequence, read N- to C-terminus: Catalase isozyme 1 (492 aa).

Active-site residues include H65 and N138. Y348 contributes to the heme binding site.

It belongs to the catalase family. Homotetramer. Heme serves as cofactor.

Its subcellular location is the cytoplasm. The protein localises to the cytosol. The protein resides in the peroxisome matrix. It carries out the reaction 2 H2O2 = O2 + 2 H2O. With respect to regulation, inhibited by salicylic acid. Functionally, catalyzes the degradation of hydrogen peroxide (H(2)O(2)) generated by peroxisomal oxidases to water and oxygen, thereby protecting cells from the toxic effects of hydrogen peroxide. This chain is Catalase isozyme 1 (CAT-1), found in Nicotiana tabacum (Common tobacco).